The following is a 208-amino-acid chain: CASP-like protein 4A4 (208 aa).

Topologically, residues 1-53 (MKELKDHVVVITYGPSSEASVTASPVSQQTPSLFAYSVTPSASRFSSRRASVH) are cytoplasmic. Residues 54–74 (VIGLVLRFITMVLCFVSALSL) form a helical membrane-spanning segment. At 75-92 (AVNVQRPSKRHLTQNSSS) the chain is on the extracellular side. Asparagine 89 is a glycosylation site (N-linked (GlcNAc...) asparagine). Residues 93–113 (FASYPELLYCFGVAVIGFVYT) form a helical membrane-spanning segment. At 114–141 (SLQTFKGVCDITHRGVLISEPLSDYISF) the chain is on the cytoplasmic side. A helical transmembrane segment spans residues 142–162 (IFDQVICYLLVSSSSVAIAWI). Topologically, residues 163-176 (QHINEDAIKTLRNN) are extracellular. N-linked (GlcNAc...) asparagine glycosylation is present at asparagine 175. The helical transmembrane segment at 177 to 197 (SIVSVSMSFSAFLVLTLSGLL) threads the bilayer. Residues 198 to 208 (SGYKLCKRFMW) lie on the Cytoplasmic side of the membrane.

This sequence belongs to the Casparian strip membrane proteins (CASP) family. As to quaternary structure, homodimer and heterodimers.

Its subcellular location is the cell membrane. This Arabidopsis thaliana (Mouse-ear cress) protein is CASP-like protein 4A4.